Consider the following 276-residue polypeptide: MRESLKNSKRLVIKVGTSTLMYGNGHVNLRTIEKLAMVLSDLRNEGKEVILVSSGAIGVGCHKLQLPARPTDIPDLQAVASVGQSELMHIYSKFFGEYGQVVGQVLLTRDVTDFPISRENVMNTLESLLSRGIIPIVNENDTVAVEELEHVTKYGDNDLLSAIVARLVQADLLIMLSDIDGFYKSNPTTDPNAIMFSEINQITPEIEALAGGRGSKFGTGGMLTKLSAATYCMASHQKMILTNGKNPTIIFDIMQGAQVGTLFANKKEAFSHDRTH.

Position 14 (Lys14) interacts with ATP. Substrate-binding residues include Ser54, Asp141, and Asn157. ATP contacts are provided by residues 177-178 (SD) and 219-225 (TGGMLTK).

The protein belongs to the glutamate 5-kinase family.

The protein localises to the cytoplasm. The catalysed reaction is L-glutamate + ATP = L-glutamyl 5-phosphate + ADP. It participates in amino-acid biosynthesis; L-proline biosynthesis; L-glutamate 5-semialdehyde from L-glutamate: step 1/2. Functionally, catalyzes the transfer of a phosphate group to glutamate to form L-glutamate 5-phosphate. The sequence is that of Glutamate 5-kinase from Listeria welshimeri serovar 6b (strain ATCC 35897 / DSM 20650 / CCUG 15529 / CIP 8149 / NCTC 11857 / SLCC 5334 / V8).